Consider the following 565-residue polypeptide: NAD-dependent malic enzyme (565 aa).

The active-site Proton donor is tyrosine 104. Arginine 157 serves as a coordination point for NAD(+). Lysine 175 acts as the Proton acceptor in catalysis. Residues glutamate 246, aspartate 247, and aspartate 270 each contribute to the a divalent metal cation site. Aspartate 270 and asparagine 418 together coordinate NAD(+).

This sequence belongs to the malic enzymes family. Homotetramer. The cofactor is Mg(2+). Mn(2+) is required as a cofactor.

It carries out the reaction (S)-malate + NAD(+) = pyruvate + CO2 + NADH. It catalyses the reaction oxaloacetate + H(+) = pyruvate + CO2. The sequence is that of NAD-dependent malic enzyme from Photorhabdus laumondii subsp. laumondii (strain DSM 15139 / CIP 105565 / TT01) (Photorhabdus luminescens subsp. laumondii).